A 404-amino-acid chain; its full sequence is Cysteine desulfurase IscS (404 aa).

Residues 75–76 (AT), N155, Q183, and 203–205 (SGH) each bind pyridoxal 5'-phosphate. K206 bears the N6-(pyridoxal phosphate)lysine mark. Position 243 (T243) interacts with pyridoxal 5'-phosphate. C328 functions as the Cysteine persulfide intermediate in the catalytic mechanism. [2Fe-2S] cluster is bound at residue C328.

This sequence belongs to the class-V pyridoxal-phosphate-dependent aminotransferase family. NifS/IscS subfamily. In terms of assembly, homodimer. Forms a heterotetramer with IscU, interacts with other sulfur acceptors. It depends on pyridoxal 5'-phosphate as a cofactor.

It localises to the cytoplasm. The enzyme catalyses (sulfur carrier)-H + L-cysteine = (sulfur carrier)-SH + L-alanine. Its pathway is cofactor biosynthesis; iron-sulfur cluster biosynthesis. Master enzyme that delivers sulfur to a number of partners involved in Fe-S cluster assembly, tRNA modification or cofactor biosynthesis. Catalyzes the removal of elemental sulfur and selenium atoms from cysteine and selenocysteine to produce alanine. Functions as a sulfur delivery protein for Fe-S cluster synthesis onto IscU, an Fe-S scaffold assembly protein, as well as other S acceptor proteins. Also functions as a selenium delivery protein in the pathway for the biosynthesis of selenophosphate. The chain is Cysteine desulfurase IscS from Salmonella paratyphi C (strain RKS4594).